Here is a 140-residue protein sequence, read N- to C-terminus: Protein archease (140 aa).

Asp11, Asp139, and Leu140 together coordinate Ca(2+).

Belongs to the archease family.

Activates the tRNA-splicing ligase complex by facilitating the enzymatic turnover of catalytic subunit RtcB. Acts by promoting the guanylylation of RtcB, a key intermediate step in tRNA ligation. Can also alter the NTP specificity of RtcB such that ATP, dGTP or ITP is used efficiently. This chain is Protein archease, found in Methanopyrus kandleri (strain AV19 / DSM 6324 / JCM 9639 / NBRC 100938).